Consider the following 881-residue polypeptide: MESADILPGSRGTVDRRCEGSEEKITPPRPVEDFNPQLFPNEVYLNFTSMHGIQPVVARIRELSRKTVSAAMVPPLEWFERLPRLETPLDIEPLHLPFSVYLISGNAGSGKSTCIQTLNETMDCVITGATRVAAQNVYTKLSSAFATRHINTIFQEFGFRGNHVQAQLGKYQYSCSSSPPPIEELQKRDIVYYWEVLVDITRRLFESTASRGEFENIRALERLLGRAPGSLTRLAFCTNGSLPAFTRTNIVIIDEAGLLGRHLLTVVVYCWWMLNAAYKSPQYAEGKVPVIVCVGSPTQTDSLESRFEHKNLKCHVRSSENVLTHIITNRTIREYVSLSTNWAIFINNKRCQEYEFGELMKVLEYGLPITEEHMRLVDTFVVPEAYINNPANLPGWTRLYSSHKEVSAYMAKLHAHLKVSGERQFVVFTLPAYTFVKTAAFDEYKKITQQPSLSLDKWLAANASRVSNYSQSRDQDAGKTQCEYYSEHGVVVARTDVTYVLNSQVSVTTRMRKFVFGFSGTFETFDAVLKDDAFIKTQGETSVEYAYRFLSTLLFSGMINFYNFLKRPGLDEGRVREAYRRMAALTAKLIPGASVLESACDNPSGAPLNFRGLTDPPGFTGGTTNDWDDDNDVVFAALNEGAIDMLYCNYEFVRPETTQEVYSQFLMLKTMFVGRYSIFMDLFGGDFESSPFDTFVDNISYKGCEIFVGSMRGGVSSIALQTDSYTLMGYTSAPVYPFVEELARRKLHEGIAELFGAMNMPRMVLRDQHGFMSVLNVNLSEFVESVDDVELDMATAVDYGLSSKLAMTIARSQGLSLDKVAICFPRNNLRINSVYVAMSRTVSSRFLRMNLNPLRERHERDTVISEHILAALRDRDVQIVY.

Positions 1–32 (MESADILPGSRGTVDRRCEGSEEKITPPRPVE) are disordered. Over residues 13 to 32 (TVDRRCEGSEEKITPPRPVE) the composition is skewed to basic and acidic residues. Position 105-112 (105-112 (GNAGSGKS)) interacts with ATP.

Belongs to the herpesviridae helicase family. In terms of assembly, associates with the primase and the primase-associated factor to form the helicase-primase complex.

It is found in the host nucleus. Component of the helicase/primase complex. Unwinds the DNA at the replication forks and generates single-stranded DNA for both leading and lagging strand synthesis. The primase synthesizes short RNA primers on the lagging strand that the polymerase elongates using dNTPs. Possesses helicase-like motifs and therefore may act as the helicase subunit of the complex. This Equus caballus (Horse) protein is DNA replication helicase.